A 254-amino-acid chain; its full sequence is Caffeoyl-CoA O-methyltransferase (254 aa).

Residues 1–25 (MATTNVEENKQTQEQQPKEIKHQEV) form a disordered region. The segment covering 7–25 (EENKQTQEQQPKEIKHQEV) has biased composition (basic and acidic residues). K28 serves as a coordination point for substrate. Residues T70, E92, 94–95 (GV), S100, D118, and A147 each bind S-adenosyl-L-methionine. Residue D170 participates in substrate binding. Residue D170 coordinates a divalent metal cation. D172 contributes to the S-adenosyl-L-methionine binding site. A divalent metal cation is bound by residues D196 and N197. A substrate-binding site is contributed by N201.

Belongs to the class I-like SAM-binding methyltransferase superfamily. Cation-dependent O-methyltransferase family. CCoAMT subfamily. A divalent metal cation is required as a cofactor.

It carries out the reaction (E)-caffeoyl-CoA + S-adenosyl-L-methionine = (E)-feruloyl-CoA + S-adenosyl-L-homocysteine + H(+). Its pathway is aromatic compound metabolism; phenylpropanoid biosynthesis. In terms of biological role, methylates caffeoyl-CoA to feruloyl-CoA and 5-hydroxyferuloyl-CoA to sinapoyl-CoA. Plays a role in the synthesis of feruloylated polysaccharides. Involved in the reinforcement of the plant cell wall. Also involved in the responding to wounding or pathogen challenge by the increased formation of cell wall-bound ferulic acid polymers. The sequence is that of Caffeoyl-CoA O-methyltransferase from Mesembryanthemum crystallinum (Common ice plant).